The chain runs to 255 residues: UPF0246 protein BVU_0413 (255 aa).

It belongs to the UPF0246 family.

The sequence is that of UPF0246 protein BVU_0413 from Phocaeicola vulgatus (strain ATCC 8482 / DSM 1447 / JCM 5826 / CCUG 4940 / NBRC 14291 / NCTC 11154) (Bacteroides vulgatus).